We begin with the raw amino-acid sequence, 203 residues long: Recombination protein RecR (203 aa).

The segment at 56–71 adopts a C4-type zinc-finger fold; it reads CAVCGNVSDEERCRIC. The Toprim domain occupies 79–179; the sequence is SLICVVEEPK…TVTRIASGLP (101 aa).

This sequence belongs to the RecR family.

Its function is as follows. May play a role in DNA repair. It seems to be involved in an RecBC-independent recombinational process of DNA repair. It may act with RecF and RecO. This is Recombination protein RecR from Mycolicibacterium vanbaalenii (strain DSM 7251 / JCM 13017 / BCRC 16820 / KCTC 9966 / NRRL B-24157 / PYR-1) (Mycobacterium vanbaalenii).